Reading from the N-terminus, the 632-residue chain is tRNA uridine 5-carboxymethylaminomethyl modification enzyme MnmG (632 aa).

FAD is bound by residues 15-20, isoleucine 127, and serine 182; that span reads GAGHAG. 276–290 is a binding site for NAD(+); sequence GPRYCPSIEDKIVRF. Residue glutamine 373 coordinates FAD.

The protein belongs to the MnmG family. Homodimer. Heterotetramer of two MnmE and two MnmG subunits. FAD serves as cofactor.

It is found in the cytoplasm. NAD-binding protein involved in the addition of a carboxymethylaminomethyl (cmnm) group at the wobble position (U34) of certain tRNAs, forming tRNA-cmnm(5)s(2)U34. The polypeptide is tRNA uridine 5-carboxymethylaminomethyl modification enzyme MnmG (Streptococcus pyogenes serotype M2 (strain MGAS10270)).